The sequence spans 506 residues: Ecdysteroid UDP-glucosyltransferase (506 aa).

The signal sequence occupies residues 1–18 (MTAYLIVFCLCCWSAARS).

The protein belongs to the UDP-glycosyltransferase family.

Catalyzes the transfer of glucose from UDP-glucose to ecdysteroids which are insect molting hormones. Expression of egt interferes with normal insect development and block molting. This is Ecdysteroid UDP-glucosyltransferase (EGT) from Lymantria dispar multicapsid nuclear polyhedrosis virus (LdMNPV).